A 174-amino-acid chain; its full sequence is Actin-related protein 2/3 complex subunit 3 (174 aa).

This sequence belongs to the ARPC3 family. As to quaternary structure, component of the Arp2/3 complex composed of arp2, act2, arc1/p41-ARC, arc2/p34-ARC, arc3/p21-ARC, arc4/p20-ARC and arc5/p16-ARC.

The protein resides in the cytoplasm. It localises to the cytoskeleton. It is found in the actin patch. Functionally, functions as a component of the Arp2/3 complex which is involved in regulation of actin polymerization and together with an activating nucleation-promoting factor (NPF) mediates the formation of branched actin networks. The sequence is that of Actin-related protein 2/3 complex subunit 3 (arc3) from Schizosaccharomyces pombe (strain 972 / ATCC 24843) (Fission yeast).